Reading from the N-terminus, the 796-residue chain is Conidiophore development regulator abaA (796 aa).

Positions 133–207 (GKDGEPVWSD…QVLDSFLKGD (75 aa)) form a DNA-binding region, TEA. Positions 215–254 (REQSDRSTAQTQPVGPRWRTSMDHLPSSHYGTHATSSYPE) are disordered. Polar residues predominate over residues 243-252 (HYGTHATSSY). A leucine-zipper-like region spans residues 341-362 (LSDVNDPLNCEIILLETNLELM). The interval 612–643 (EGLSDKTAPTSVLDPFPNLTQQTTSQTAGINV) is disordered. Residues 629–643 (NLTQQTTSQTAGINV) show a composition bias toward polar residues.

Belongs to the TEC1 family.

The protein localises to the nucleus. BrlA, abaA and wetA are pivotal regulators of conidiophore development and conidium maturation. They act individually and together to regulate their own expression and that of numerous other sporulation-specific gene. Controls temporal and spatial specificity in Aspergillus development. Directs the differentiation of phialides and is continuously required for maintenance of their function. Expression of abaA leads to activation of brlA and wetA, cessation of vegetative growth, and accentuated cellular vacuolization. Binds to the sequence 5'-CATTCY-3', where Y is a pyrimidine, making both major- and minor-groove contacts. Multiple abaA binding sites are present in the cis-acting regulatory regions of several developmentally controlled structural genes as well as those of the upstream regulatory gene brlA, the downstream regulatory gene wetA, and abaA itself. This Emericella nidulans (strain FGSC A4 / ATCC 38163 / CBS 112.46 / NRRL 194 / M139) (Aspergillus nidulans) protein is Conidiophore development regulator abaA.